The sequence spans 286 residues: Pantothenate synthetase (286 aa).

30-37 (MGFLHEGH) is an ATP binding site. Histidine 37 serves as the catalytic Proton donor. (R)-pantoate is bound at residue glutamine 61. Glutamine 61 lines the beta-alanine pocket. 147-150 (GLKD) contacts ATP. A (R)-pantoate-binding site is contributed by glutamine 153. Residues valine 176 and 184–187 (KSSR) contribute to the ATP site.

This sequence belongs to the pantothenate synthetase family. As to quaternary structure, homodimer.

The protein resides in the cytoplasm. The enzyme catalyses (R)-pantoate + beta-alanine + ATP = (R)-pantothenate + AMP + diphosphate + H(+). Its pathway is cofactor biosynthesis; (R)-pantothenate biosynthesis; (R)-pantothenate from (R)-pantoate and beta-alanine: step 1/1. Functionally, catalyzes the condensation of pantoate with beta-alanine in an ATP-dependent reaction via a pantoyl-adenylate intermediate. This is Pantothenate synthetase from Bacillus subtilis (strain 168).